The following is a 238-amino-acid chain: tRNA (guanine-N(7)-)-methyltransferase (238 aa).

Residues Glu-62, Glu-87, Asp-119, and Asp-141 each coordinate S-adenosyl-L-methionine. Residue Asp-141 is part of the active site. Residues Lys-145, Asp-177, and 216–219 each bind substrate; that span reads TRYE.

This sequence belongs to the class I-like SAM-binding methyltransferase superfamily. TrmB family.

It catalyses the reaction guanosine(46) in tRNA + S-adenosyl-L-methionine = N(7)-methylguanosine(46) in tRNA + S-adenosyl-L-homocysteine. It participates in tRNA modification; N(7)-methylguanine-tRNA biosynthesis. Functionally, catalyzes the formation of N(7)-methylguanine at position 46 (m7G46) in tRNA. This is tRNA (guanine-N(7)-)-methyltransferase from Novosphingobium aromaticivorans (strain ATCC 700278 / DSM 12444 / CCUG 56034 / CIP 105152 / NBRC 16084 / F199).